The primary structure comprises 976 residues: DNA-directed RNA polymerase 1, mitochondrial (976 aa).

Residues 1 to 42 (MWRNILGRASLRKVKFLSDSSSSGTHYPVNRVRGILSSVNLS) constitute a mitochondrion transit peptide. Residues aspartate 677, lysine 752, and aspartate 909 contribute to the active site.

This sequence belongs to the phage and mitochondrial RNA polymerase family.

It localises to the mitochondrion. The catalysed reaction is RNA(n) + a ribonucleoside 5'-triphosphate = RNA(n+1) + diphosphate. In terms of biological role, DNA-dependent RNA polymerase catalyzes the transcription of DNA into RNA using the four ribonucleoside triphosphates as substrates. This chain is DNA-directed RNA polymerase 1, mitochondrial (RPOT1), found in Arabidopsis thaliana (Mouse-ear cress).